The sequence spans 103 residues: Large ribosomal subunit protein uL23 (103 aa).

Belongs to the universal ribosomal protein uL23 family. Part of the 50S ribosomal subunit. Contacts protein L29, and trigger factor when it is bound to the ribosome.

Functionally, one of the early assembly proteins it binds 23S rRNA. One of the proteins that surrounds the polypeptide exit tunnel on the outside of the ribosome. Forms the main docking site for trigger factor binding to the ribosome. This Zymomonas mobilis subsp. mobilis (strain ATCC 31821 / ZM4 / CP4) protein is Large ribosomal subunit protein uL23.